The following is a 229-amino-acid chain: Protein GrpE (229 aa).

Disordered stretches follow at residues 1 to 49 (MTEG…SANS) and 207 to 229 (DSTA…EDGD). Positions 13–24 (TDKRRIDPDTGE) are enriched in basic and acidic residues.

It belongs to the GrpE family. In terms of assembly, homodimer.

The protein localises to the cytoplasm. Participates actively in the response to hyperosmotic and heat shock by preventing the aggregation of stress-denatured proteins, in association with DnaK and GrpE. It is the nucleotide exchange factor for DnaK and may function as a thermosensor. Unfolded proteins bind initially to DnaJ; upon interaction with the DnaJ-bound protein, DnaK hydrolyzes its bound ATP, resulting in the formation of a stable complex. GrpE releases ADP from DnaK; ATP binding to DnaK triggers the release of the substrate protein, thus completing the reaction cycle. Several rounds of ATP-dependent interactions between DnaJ, DnaK and GrpE are required for fully efficient folding. The chain is Protein GrpE from Mycobacterium leprae (strain TN).